The following is a 421-amino-acid chain: Testin (421 aa).

Residues 92–199 (MILTNPVAAK…GDVKLPQEMD (108 aa)) enclose the PET domain. LIM zinc-binding domains are found at residues 234 to 297 (YSCY…CDSE), 299 to 359 (PRCA…NHAV), and 362 to 421 (QGCH…KMMS).

Belongs to the prickle / espinas / testin family. Interacts via LIM domain 1 with ZYX. Interacts (via LIM domain 3) with ENAH and VASP. Interacts with ALKBH4, talin, actin, alpha-actinin, GRIP1 and PXN. Interacts (via LIM domain 2) with ACTL7A (via N-terminus). Heterodimer with ACTL7A; the heterodimer interacts with ENAH to form a heterotrimer.

It is found in the cytoplasm. Its subcellular location is the cell junction. The protein localises to the focal adhesion. Scaffold protein that may play a role in cell adhesion, cell spreading and in the reorganization of the actin cytoskeleton. Plays a role in the regulation of cell proliferation. May act as a tumor suppressor. The polypeptide is Testin (TES) (Loxodonta africana (African elephant)).